We begin with the raw amino-acid sequence, 178 residues long: Large ribosomal subunit protein uL6c (178 aa).

The protein belongs to the universal ribosomal protein uL6 family. As to quaternary structure, part of the 50S ribosomal subunit.

The protein resides in the plastid. Its subcellular location is the chloroplast. Binds 23S rRNA. The sequence is that of Large ribosomal subunit protein uL6c (rpl6) from Phaeodactylum tricornutum (strain CCAP 1055/1).